We begin with the raw amino-acid sequence, 290 residues long: ATP synthase gamma chain (290 aa).

This sequence belongs to the ATPase gamma chain family. F-type ATPases have 2 components, CF(1) - the catalytic core - and CF(0) - the membrane proton channel. CF(1) has five subunits: alpha(3), beta(3), gamma(1), delta(1), epsilon(1). CF(0) has three main subunits: a, b and c.

It is found in the cell inner membrane. Functionally, produces ATP from ADP in the presence of a proton gradient across the membrane. The gamma chain is believed to be important in regulating ATPase activity and the flow of protons through the CF(0) complex. The chain is ATP synthase gamma chain from Thiobacillus denitrificans (strain ATCC 25259 / T1).